Consider the following 388-residue polypeptide: MALVPPLGREFPPEPVNCPLAAPRELDVVGGTICPAPEEETSRPEQVQASLGLPEHCMGELKSTESATSPSRLPLASSHEHQDGGKPCEHSDSGLEVLEAEQDSLHLCLLRLNFRLQDLERGLGSWTLAHNRIVQMQALQAELRGAAERVDALLAFGEGLAERSEPRAWASLEQVLRALGTHRDTIFQRLWQLQAQLISYSLVLEKANLLDQDLEVEGDSDGPAAGGVWGPWAPSTFPTPAELEWDPAGDVGGLGPSGQKISRIPGAPCELCGYRGPQSSGQGLEDLLSLGLGHRKHLAAHHRRRLRKPQDRKRQVSPSLPDAMLEVDRGVPAPASKRPLTLFFLLLFLLLVGATLLLPLSGVSCCSHARLARTPYLVLSYVNGLPPI.

Over 1–339 (MALVPPLGRE…GVPAPASKRP (339 aa)) the chain is Cytoplasmic. Positions 60 to 92 (ELKSTESATSPSRLPLASSHEHQDGGKPCEHSD) are disordered. Positions 78-92 (SHEHQDGGKPCEHSD) are enriched in basic and acidic residues. One can recognise a KASH domain in the interval 331-388 (VPAPASKRPLTLFFLLLFLLLVGATLLLPLSGVSCCSHARLARTPYLVLSYVNGLPPI). Residues 340–360 (LTLFFLLLFLLLVGATLLLPL) form a helical; Anchor for type IV membrane protein membrane-spanning segment. Residues 361-388 (SGVSCCSHARLARTPYLVLSYVNGLPPI) are Perinuclear space-facing.

The protein belongs to the nesprin family. As to quaternary structure, core component of LINC complexes which are composed of inner nuclear membrane SUN domain-containing proteins coupled to outer nuclear membrane KASH domain-containing nesprins. SUN and KASH domain-containing proteins seem to bind each other promiscuously; however, differentially expression of LINC complex constituents can give rise to specific assemblies. Probably part of a SUN1-containing LINC complex. Interacts with kinesins KIF5B and KLC1. In terms of processing, the disulfid bond with SUN1 or SUN2 is required for stability of the respective LINC complex under tensile forces. In terms of tissue distribution, expressed in secretory epithelial cells, such as those found in exocrine pancreas, bulbourethral gland, mammary gland and salivary gland (at protein level). Also expressed in the cochlea, where it is restricted primarily to the 3 rows of outer hair cells and 1 row of inner hair cells (at protein level). Not detected in other cells of the cochlea, including Deiter's cells and pillar cells, nor in liver and kidney (at protein level).

It localises to the nucleus outer membrane. In terms of biological role, as a component of the LINC (LInker of Nucleoskeleton and Cytoskeleton) complex, involved in the connection between the nuclear lamina and the cytoskeleton. The nucleocytoplasmic interactions established by the LINC complex play an important role in the transmission of mechanical forces across the nuclear envelope and in nuclear movement and positioning. Behaves as a kinesin cargo, providing a functional binding site for kinesin-1 at the nuclear envelope. Hence may contribute to the establishment of secretory epithelial morphology, by promoting kinesin-dependent apical migration of the centrosome and Golgi apparatus and basal localization of the nucleus. The protein is Nesprin-4 (Syne4) of Mus musculus (Mouse).